A 916-amino-acid polypeptide reads, in one-letter code: Isoleucine--tRNA ligase (916 aa).

Positions P57–H67 match the 'HIGH' region motif. E554 serves as a coordination point for L-isoleucyl-5'-AMP. The short motif at K595–S599 is the 'KMSKS' region element. Position 598 (K598) interacts with ATP. Zn(2+) is bound by residues C885, C888, C905, and C908.

This sequence belongs to the class-I aminoacyl-tRNA synthetase family. IleS type 1 subfamily. In terms of assembly, monomer. Requires Zn(2+) as cofactor.

Its subcellular location is the cytoplasm. The catalysed reaction is tRNA(Ile) + L-isoleucine + ATP = L-isoleucyl-tRNA(Ile) + AMP + diphosphate. In terms of biological role, catalyzes the attachment of isoleucine to tRNA(Ile). As IleRS can inadvertently accommodate and process structurally similar amino acids such as valine, to avoid such errors it has two additional distinct tRNA(Ile)-dependent editing activities. One activity is designated as 'pretransfer' editing and involves the hydrolysis of activated Val-AMP. The other activity is designated 'posttransfer' editing and involves deacylation of mischarged Val-tRNA(Ile). This is Isoleucine--tRNA ligase from Staphylococcus epidermidis (strain ATCC 12228 / FDA PCI 1200).